The sequence spans 807 residues: Protein FAR1-RELATED SEQUENCE 2 (807 aa).

The FAR1 domain occupies tyrosine 52–proline 138. The region spanning valine 219 to serine 315 is the MULE domain. Residues phenylalanine 499–aspartate 535 form an SWIM-type zinc finger. Residues glutamate 660–alanine 680 are a coiled coil. The segment covering glycine 788 to serine 798 has biased composition (polar residues). A disordered region spans residues glycine 788–asparagine 807.

This sequence belongs to the FHY3/FAR1 family. In terms of tissue distribution, expressed in hypocotyls, rosette and cauline leaves, inflorescences stems, flowers and siliques.

Its subcellular location is the nucleus. Putative transcription activator involved in regulating light control of development. The chain is Protein FAR1-RELATED SEQUENCE 2 (FRS2) from Arabidopsis thaliana (Mouse-ear cress).